The chain runs to 468 residues: 3-isopropylmalate dehydratase large subunit (468 aa).

[4Fe-4S] cluster contacts are provided by Cys-349, Cys-409, and Cys-412.

Belongs to the aconitase/IPM isomerase family. LeuC type 1 subfamily. As to quaternary structure, heterodimer of LeuC and LeuD. [4Fe-4S] cluster serves as cofactor.

It carries out the reaction (2R,3S)-3-isopropylmalate = (2S)-2-isopropylmalate. Its pathway is amino-acid biosynthesis; L-leucine biosynthesis; L-leucine from 3-methyl-2-oxobutanoate: step 2/4. Catalyzes the isomerization between 2-isopropylmalate and 3-isopropylmalate, via the formation of 2-isopropylmaleate. This is 3-isopropylmalate dehydratase large subunit from Shewanella baltica (strain OS155 / ATCC BAA-1091).